The primary structure comprises 107 residues: Nucleoid-associated protein Pnec_0645 (107 aa).

Belongs to the YbaB/EbfC family. As to quaternary structure, homodimer.

It localises to the cytoplasm. The protein resides in the nucleoid. In terms of biological role, binds to DNA and alters its conformation. May be involved in regulation of gene expression, nucleoid organization and DNA protection. The polypeptide is Nucleoid-associated protein Pnec_0645 (Polynucleobacter necessarius subsp. necessarius (strain STIR1)).